The following is a 318-amino-acid chain: Very-long-chain 3-oxoacyl-CoA reductase-A (318 aa).

The chain crosses the membrane as a helical span at residues 15 to 35 (FWYLGVLAAAWWGLRAACCLL). 54–83 (GKWAVVTGATDGIGKAYAEELARRGMSIVL) contributes to the NADP(+) binding site. Transmembrane regions (helical) follow at residues 187-207 (GVIL…LTVY) and 281-301 (AIMG…SMGM). Residue Ser194 participates in substrate binding. Tyr207 functions as the Proton acceptor in the catalytic mechanism.

The protein belongs to the short-chain dehydrogenases/reductases (SDR) family. 17-beta-HSD 3 subfamily.

The protein localises to the endoplasmic reticulum membrane. It carries out the reaction a very-long-chain (3R)-3-hydroxyacyl-CoA + NADP(+) = a very-long-chain 3-oxoacyl-CoA + NADPH + H(+). The catalysed reaction is 17beta-estradiol + NAD(+) = estrone + NADH + H(+). It catalyses the reaction 17beta-estradiol + NADP(+) = estrone + NADPH + H(+). The protein operates within lipid metabolism; fatty acid biosynthesis. It participates in steroid biosynthesis; estrogen biosynthesis. In terms of biological role, catalyzes the second of the four reactions of the long-chain fatty acids elongation cycle. This endoplasmic reticulum-bound enzymatic process, allows the addition of two carbons to the chain of long- and very long-chain fatty acids/VLCFAs per cycle. This enzyme has a 3-ketoacyl-CoA reductase activity, reducing 3-ketoacyl-CoA to 3-hydroxyacyl-CoA, within each cycle of fatty acid elongation. Thereby, it may participate in the production of VLCFAs of different chain lengths that are involved in multiple biological processes as precursors of membrane lipids and lipid mediators. May also catalyze the transformation of estrone (E1) into estradiol (E2) and play a role in estrogen formation. This Xenopus laevis (African clawed frog) protein is Very-long-chain 3-oxoacyl-CoA reductase-A (hsd17b12-a).